The chain runs to 178 residues: Gamma-crystallin S (178 aa).

Position 2 is an N-acetylserine (Ser2). An N-terminal arm region spans residues 2 to 5; the sequence is SKAG. 2 Beta/gamma crystallin 'Greek key' domains span residues 6 to 44 and 45 to 87; these read TKITFFEDKNFQGRHYDSDCDCADFHMYLSRCNSIRVEG and GTWA…RAVH. Residues 88-93 are connecting peptide; sequence LSSGGQ. Beta/gamma crystallin 'Greek key' domains lie at 94 to 134 and 135 to 177; these read YKLQ…KVLE and GAWI…RRIV.

This sequence belongs to the beta/gamma-crystallin family. Monomer.

In terms of biological role, crystallins are the dominant structural components of the vertebrate eye lens. This Bos taurus (Bovine) protein is Gamma-crystallin S (CRYGS).